The sequence spans 153 residues: Putative riboflavin kinase (153 aa).

Thr28 and Asn30 together coordinate Mg(2+). The Nucleophile role is filled by Glu80.

As to quaternary structure, monomer. Zn(2+) serves as cofactor. The cofactor is Mg(2+).

Its subcellular location is the cytoplasm. The enzyme catalyses riboflavin + ATP = FMN + ADP + H(+). It participates in cofactor biosynthesis; FMN biosynthesis; FMN from riboflavin (ATP route): step 1/1. Functionally, catalyzes the phosphorylation of riboflavin (vitamin B2) to form flavin-mononucleotide (FMN). The polypeptide is Putative riboflavin kinase (Drosophila melanogaster (Fruit fly)).